Consider the following 530-residue polypeptide: Glucose-6-phosphate isomerase (530 aa).

Glu-322 acts as the Proton donor in catalysis. Active-site residues include His-351 and Lys-455.

This sequence belongs to the GPI family.

It localises to the cytoplasm. It catalyses the reaction alpha-D-glucose 6-phosphate = beta-D-fructose 6-phosphate. It functions in the pathway carbohydrate biosynthesis; gluconeogenesis. The protein operates within carbohydrate degradation; glycolysis; D-glyceraldehyde 3-phosphate and glycerone phosphate from D-glucose: step 2/4. In terms of biological role, catalyzes the reversible isomerization of glucose-6-phosphate to fructose-6-phosphate. The protein is Glucose-6-phosphate isomerase of Citrifermentans bemidjiense (strain ATCC BAA-1014 / DSM 16622 / JCM 12645 / Bem) (Geobacter bemidjiensis).